The sequence spans 277 residues: Large ribosomal subunit protein uL2 (277 aa).

Residues 212–277 (RWRGKRPHVR…KFIVRGRKSK (66 aa)) are disordered. A compositionally biased stretch (basic residues) spans 254–277 (TAGKKTRDKKKASTKFIVRGRKSK).

It belongs to the universal ribosomal protein uL2 family. Part of the 50S ribosomal subunit. Forms a bridge to the 30S subunit in the 70S ribosome.

Functionally, one of the primary rRNA binding proteins. Required for association of the 30S and 50S subunits to form the 70S ribosome, for tRNA binding and peptide bond formation. It has been suggested to have peptidyltransferase activity; this is somewhat controversial. Makes several contacts with the 16S rRNA in the 70S ribosome. This Leuconostoc mesenteroides subsp. mesenteroides (strain ATCC 8293 / DSM 20343 / BCRC 11652 / CCM 1803 / JCM 6124 / NCDO 523 / NBRC 100496 / NCIMB 8023 / NCTC 12954 / NRRL B-1118 / 37Y) protein is Large ribosomal subunit protein uL2.